The chain runs to 64 residues: Long neurotoxin MS4 (64 aa).

5 disulfide bridges follow: Cys3/Cys24, Cys6/Cys11, Cys17/Cys41, Cys45/Cys57, and Cys58/Cys63.

Belongs to the three-finger toxin family. Ancestral subfamily. As to expression, expressed by the venom gland.

The protein localises to the secreted. In terms of biological role, produces peripheral paralysis by blocking neuromuscular transmission at the postsynaptic site. Weak inhibitor of the endogenous nicotinic acetylcholine receptors (nAChR) in the human rhabdomyosarcoma TE 671 cell line with an IC(50) of 690 mM. This neurotoxin is lethal to zebrafish by injection at the back of the dorsolateral region, but is not toxic to mice by intraperitoneal injection. This chain is Long neurotoxin MS4, found in Micrurus surinamensis (Surinam coral snake).